The following is a 361-amino-acid chain: Molybdenum import ATP-binding protein ModC (361 aa).

An ABC transporter domain is found at 1–228; sequence MLNINIEKQF…EQMRPWVPLQ (228 aa). An ATP-binding site is contributed by 31-38; the sequence is GRSGAGKT. A Mop domain is found at 289 to 356; sequence GSSIRNLLRG…IKGVTMTQMD (68 aa).

This sequence belongs to the ABC transporter superfamily. Molybdate importer (TC 3.A.1.8) family. In terms of assembly, the complex is composed of two ATP-binding proteins (ModC), two transmembrane proteins (ModB) and a solute-binding protein (ModA).

Its subcellular location is the cell inner membrane. It catalyses the reaction molybdate(out) + ATP + H2O = molybdate(in) + ADP + phosphate + H(+). Part of the ABC transporter complex ModABC involved in molybdenum import. Responsible for energy coupling to the transport system. This is Molybdenum import ATP-binding protein ModC from Shewanella sp. (strain MR-4).